We begin with the raw amino-acid sequence, 432 residues long: Glycerophosphocholine acyltransferase 1 (432 aa).

Residues 1 to 110 (MYKLDNNDID…DSIFFKNSSR (110 aa)) are Cytoplasmic-facing. At Ser-78 the chain carries Phosphoserine. A helical membrane pass occupies residues 111–131 (LEKAFYPFTLFNIFFIGFLMG). Arg-132 is a topological domain (lumenal). Residues 133–153 (FPEWFHVYYTILFFVLMPIRF) traverse the membrane as a helical segment. The Cytoplasmic portion of the chain corresponds to 154–162 (YTYYKTKNH). A helical transmembrane segment spans residues 163-183 (YFLADFCYFVNMLCLLFIWIF). Residues 184–187 (PYSY) are Lumenal-facing. The helical transmembrane segment at 188 to 208 (SLFQSCFAFTFGTLCFAVITW) threads the bilayer. The Cytoplasmic segment spans residues 209 to 221 (RNSLVIHSIDKTT). A helical membrane pass occupies residues 222–242 (SCFIHIIPPCVMYVIYHGLPL). Over 243–263 (EYKIERFPGAIIQSELDIKKN) the chain is Lumenal. Residues 264–284 (ILWTSLYYLVWQSLYHYFITL) traverse the membrane as a helical segment. Residues 285-318 (KKSSKIKSGERMTSFEYLTTHQFKNFWAVKLRSP) are Cytoplasmic-facing. A helical transmembrane segment spans residues 319-339 (WPMIIYTLSQYFYQLFTMLLC). Residues 340-346 (GIWIRYK) lie on the Lumenal side of the membrane. The helical transmembrane segment at 347–369 (LAAALFLTIVFLWASHNGATYYI) threads the bilayer. Residues 370-432 (DHYGKNFEKE…DSSSVSSKSD (63 aa)) are Cytoplasmic-facing. The disordered stretch occupies residues 413–432 (LNVNRDEDFDDSSSVSSKSD).

This sequence belongs to the GPC1 family.

It is found in the membrane. It carries out the reaction sn-glycerol 3-phosphocholine + an acyl-CoA = a 1-acyl-sn-glycero-3-phosphocholine + CoA. The catalysed reaction is sn-glycero-3-phosphoethanolamine + an acyl-CoA = a monoacyl-sn-glycero-3-phosphoethanolamine + CoA. It catalyses the reaction sn-glycero-3-phosphoethanolamine + (9Z)-octadecenoyl-CoA = (9Z-octadecenoyl)-sn-glycero-3-phosphoethanolamine + CoA. The enzyme catalyses sn-glycerol 3-phosphocholine + hexadecanoyl-CoA = hexadecanoyl-sn-glycero-3-phosphocholine + CoA. It carries out the reaction (9Z,12Z)-octadecadienoyl-CoA + sn-glycerol 3-phosphocholine = (9Z,12Z-octadecadienoyl)-sn-glycero-3-phosphocholine + CoA. The catalysed reaction is (12R)-hydroxy-(9Z)-octadecenoyl-CoA + sn-glycerol 3-phosphocholine = (12R-hydroxy-9Z-octadecenoyl)-sn-glycero-3-phosphocholine + CoA. It catalyses the reaction (9Z,12Z,15Z)-octadecatrienoyl-CoA + sn-glycerol 3-phosphocholine = (9Z,12Z,15Z-octadecatrienoyl)-sn-glycero-3-phosphocholine + CoA. The enzyme catalyses sn-glycerol 3-phosphocholine + (9Z)-octadecenoyl-CoA = (9Z-octadecenoyl)-sn-glycero-3-phosphocholine + CoA. It carries out the reaction 1-(9Z-octadecenoyl)-sn-glycero-3-phosphoethanolamine + sn-glycerol 3-phosphocholine = (9Z-octadecenoyl)-sn-glycero-3-phosphocholine + sn-glycero-3-phosphoethanolamine. Its activity is regulated as follows. The GPCAT activity is sensitive to N-ethylmaleimide, phenanthroline, and divalent cations including Ca(2+), Mg(2+), Mn(2+) and Zn(2+). The activity is also inhibited by glycerol-3-phosphate (G3P). Glycerophosphocholine acyltransferase (GPCAT) that utilizes acyl-CoA to acylate glycero-3-phosphocholine (GPC), forming lysophosphatidylcholine (LPC). Shows broad acyl specificities with a preference for 16:0-CoA, polyunsaturated acyl-CoA, and the hydroxylated ricinoleoyl-CoA. Also catalyzes the acylation of glycero-3-phosphoethanolamine (GPE) with acyl-CoA. In addition to acyl-CoA, GPCAT efficiently utilizes LPC and lysophosphatidylethanolamine (LPE) as acyl donors in the acylation of GPC. Contributes to the maintenance of phosphatidylcholine (PC) homeostasis and might also have specific functions in acyl editing of PC, such as transferring acyl groups modified at the sn-2 position of PC to the sn-1. Involved in postsynthetic PC remodeling that produces more saturated PC species. This Saccharomyces cerevisiae (strain ATCC 204508 / S288c) (Baker's yeast) protein is Glycerophosphocholine acyltransferase 1.